The chain runs to 216 residues: 3-keto-L-gulonate-6-phosphate decarboxylase UlaD (216 aa).

Asp-11 contributes to the substrate binding site. Mg(2+) is bound by residues Glu-33 and Asp-62. Arg-192 contributes to the substrate binding site.

The protein belongs to the HPS/KGPDC family. KGPDC subfamily. As to quaternary structure, homodimer. It depends on Mg(2+) as a cofactor.

It carries out the reaction 3-dehydro-L-gulonate 6-phosphate + H(+) = L-xylulose 5-phosphate + CO2. It functions in the pathway cofactor degradation; L-ascorbate degradation; D-xylulose 5-phosphate from L-ascorbate: step 2/4. In terms of biological role, catalyzes the decarboxylation of 3-keto-L-gulonate-6-P into L-xylulose-5-P. Is involved in the anaerobic L-ascorbate utilization. The polypeptide is 3-keto-L-gulonate-6-phosphate decarboxylase UlaD (Escherichia fergusonii (strain ATCC 35469 / DSM 13698 / CCUG 18766 / IAM 14443 / JCM 21226 / LMG 7866 / NBRC 102419 / NCTC 12128 / CDC 0568-73)).